Reading from the N-terminus, the 89-residue chain is Progonadoliberin-1 (89 aa).

A signal peptide spans 1–23; sequence MKAFPTFALLFLVLLFSAHVSDA. Residue glutamine 24 is modified to Pyrrolidone carboxylic acid. A Glycine amide modification is found at glycine 33.

This sequence belongs to the GnRH family. In terms of tissue distribution, expressed in the forebrain from larval stages.

The protein localises to the secreted. Functionally, stimulates the secretion of gonadotropins. The sequence is that of Progonadoliberin-1 (gnrh1) from Xenopus laevis (African clawed frog).